A 173-amino-acid polypeptide reads, in one-letter code: PTS system glucose-specific EIIA component (173 aa).

Residues 40-144 form the PTS EIIA type-1 domain; it reads DPTFAQKMMG…STVTPVVVTN (105 aa). Zn(2+)-binding residues include His-77 and His-92. Residue His-92 is the Tele-phosphohistidine intermediate; for EIIA activity of the active site. At His-92 the chain carries Phosphohistidine; by HPr.

As to quaternary structure, heterodimer with glycerol kinase (glpk). The cofactor is Zn(2+).

It localises to the cytoplasm. Functionally, the phosphoenolpyruvate-dependent sugar phosphotransferase system (sugar PTS), a major carbohydrate active transport system, catalyzes the phosphorylation of incoming sugar substrates concomitantly with their translocation across the cell membrane. The enzyme II complex composed of PtsG and Crr is involved in glucose transport. In Halalkalibacterium halodurans (strain ATCC BAA-125 / DSM 18197 / FERM 7344 / JCM 9153 / C-125) (Bacillus halodurans), this protein is PTS system glucose-specific EIIA component (crr).